The sequence spans 160 residues: MRIWIDADACPKAAKELVCKFALKRKLEVWMVAGQPQVKPPFACVRLVVVESGMDAADDYLVEQAEPGDLVICSDVPLADRLIKKQVAALDPRGREFDARNMGDKLAMRNLMADLRDLGQMGGGQAPYGDRDRQAFANALDRLLTRLQREAGLRANQPHK.

It belongs to the UPF0178 family.

This is UPF0178 protein PSPA7_5991 from Pseudomonas paraeruginosa (strain DSM 24068 / PA7) (Pseudomonas aeruginosa (strain PA7)).